We begin with the raw amino-acid sequence, 590 residues long: NADH-ubiquinone oxidoreductase chain 5 (590 aa).

18 helical membrane-spanning segments follow: residues 1 to 21 (MFLI…SFMF), 28 to 48 (FWLS…SFLM), 58 to 78 (YYDF…TYVC), 81 to 101 (FYMF…FYAF), 113 to 133 (FLII…SYDF), 136 to 156 (AYCG…YFWY), 176 to 198 (VLLI…TFYF), 245 to 265 (ALIH…FVYW), 273 to 293 (YFYN…LCVF), 310 to 330 (ISFS…LFFC), 333 to 353 (MFYK…FFGL), 372 to 392 (LLLI…GFYC), 395 to 415 (MLLA…LFIS), 428 to 450 (FLLF…FLLF), 461 to 481 (ISLY…CIFV), 501 to 521 (IAIF…GCLF), 536 to 556 (IFFV…YFVC), and 568 to 588 (FVIY…LWIL).

This sequence belongs to the complex I subunit 5 family.

It is found in the mitochondrion inner membrane. The enzyme catalyses a ubiquinone + NADH + 5 H(+)(in) = a ubiquinol + NAD(+) + 4 H(+)(out). Functionally, core subunit of the mitochondrial membrane respiratory chain NADH dehydrogenase (Complex I) that is believed to belong to the minimal assembly required for catalysis. Complex I functions in the transfer of electrons from NADH to the respiratory chain. The immediate electron acceptor for the enzyme is believed to be ubiquinone. In Trypanosoma brucei brucei, this protein is NADH-ubiquinone oxidoreductase chain 5 (ND5).